The primary structure comprises 208 residues: Riboflavin synthase (208 aa).

2 Lumazine-binding repeats span residues 1 to 97 (MFTG…MGGH) and 98 to 195 (IISG…VDTT). Residues 4–6 (GIV), 48–50 (CLT), 62–67 (DIMKIT), 101–103 (GHI), lysine 137, 146–148 (SLT), and 160–165 (SIIPET) contribute to the 2,4-dihydroxypteridine site.

As to quaternary structure, homotrimer.

The catalysed reaction is 2 6,7-dimethyl-8-(1-D-ribityl)lumazine + H(+) = 5-amino-6-(D-ribitylamino)uracil + riboflavin. It participates in cofactor biosynthesis; riboflavin biosynthesis; riboflavin from 2-hydroxy-3-oxobutyl phosphate and 5-amino-6-(D-ribitylamino)uracil: step 2/2. Functionally, catalyzes the dismutation of two molecules of 6,7-dimethyl-8-ribityllumazine, resulting in the formation of riboflavin and 5-amino-6-(D-ribitylamino)uracil. The polypeptide is Riboflavin synthase (ribE) (Buchnera aphidicola subsp. Schizaphis graminum (strain Sg)).